A 137-amino-acid polypeptide reads, in one-letter code: Proofreading thioesterase EntH (137 aa).

The Nucleophile or proton acceptor role is filled by E63.

It belongs to the thioesterase PaaI family. Homotetramer. Dimer of dimers. Interacts specifically with the aryl carrier protein (ArCP) domain of EntB.

Its subcellular location is the cytoplasm. It participates in siderophore biosynthesis; enterobactin biosynthesis. Its function is as follows. Required for optimal enterobactin synthesis. Acts as a proofreading enzyme that prevents EntB misacylation by hydrolyzing the thioester bound existing between EntB and wrongly charged molecules. The protein is Proofreading thioesterase EntH of Escherichia coli O6:H1 (strain CFT073 / ATCC 700928 / UPEC).